A 647-amino-acid polypeptide reads, in one-letter code: Glutamyl-tRNA(Gln) amidotransferase subunit B, mitochondrial (647 aa).

A mitochondrion-targeting transit peptide spans 1–16 (MARNLCRNVQTTPRPL). The segment at 39–77 (PRPRYFGSSTAKSAKKKSNNKAYSGSSMSAGDASAGPSR) is disordered. The span at 58 to 76 (NKAYSGSSMSAGDASAGPS) shows a compositional bias: low complexity.

It belongs to the GatB/GatE family. GatB subfamily. Subunit of the heterotrimeric GatCAB amidotransferase (AdT) complex, composed of A, B and C subunits.

The protein resides in the mitochondrion. The enzyme catalyses L-glutamyl-tRNA(Gln) + L-glutamine + ATP + H2O = L-glutaminyl-tRNA(Gln) + L-glutamate + ADP + phosphate + H(+). In terms of biological role, allows the formation of correctly charged Gln-tRNA(Gln) through the transamidation of misacylated Glu-tRNA(Gln) in the mitochondria. The reaction takes place in the presence of glutamine and ATP through an activated gamma-phospho-Glu-tRNA(Gln). The chain is Glutamyl-tRNA(Gln) amidotransferase subunit B, mitochondrial from Mycosarcoma maydis (Corn smut fungus).